The sequence spans 351 residues: Polycomb group RING finger protein 6 (351 aa).

The interval 1–114 is disordered; the sequence is MEEAETDATE…FSLRLESGRA (114 aa). Residues 9 to 19 are compositionally biased toward basic and acidic residues; the sequence is TENKRASEAKR. A compositionally biased stretch (pro residues) spans 24–37; it reads LPPPPPPISPPALI. The residue at position 32 (serine 32) is a Phosphoserine. The span at 38–51 shows a compositional bias: low complexity; that stretch reads PAPAAGEEGPASLA. Over residues 62 to 80 the composition is skewed to basic and acidic residues; it reads RPPELEPERSLGRLRGRFE. Residues 69–110 are a coiled coil; that stretch reads ERSLGRLRGRFEDYDEELEEDEEMEEEEEEEEEMSHFSLRLE. The segment covering 81-101 has biased composition (acidic residues); that stretch reads DYDEELEEDEEMEEEEEEEEE. Serine 116 is subject to Phosphoserine. Residues 135–174 form an RING-type zinc finger; that stretch reads CSICKGYLIDATTITECLHTFCKSCIVRHFYYSNRCPKCN. Glycyl lysine isopeptide (Lys-Gly) (interchain with G-Cter in SUMO2) cross-links involve residues lysine 224 and lysine 235.

In terms of assembly, component of a PRC1-like complex. Interacts with BMI1/PCGF4, RING1 and RNF2. Interacts with KDM5D. Interacts with CBX4, CBX6, CBX7 and CBX8. Post-translationally, phosphorylated during mitosis.

Its subcellular location is the nucleus. Functionally, transcriptional repressor. May modulate the levels of histone H3K4Me3 by activating KDM5D histone demethylase. Component of a Polycomb group (PcG) multiprotein PRC1-like complex, a complex class required to maintain the transcriptionally repressive state of many genes, including Hox genes, throughout development. PcG PRC1 complex acts via chromatin remodeling and modification of histones; it mediates monoubiquitination of histone H2A 'Lys-119', rendering chromatin heritably changed in its expressibility. Within the PRC1-like complex, regulates RNF2 ubiquitin ligase activity. The polypeptide is Polycomb group RING finger protein 6 (Pcgf6) (Rattus norvegicus (Rat)).